The sequence spans 173 residues: MFRPPSIKDAKKIWELIGRCKPLDINSPYCYALIGRDFFDSSIVYEEEGRIKGVVIGYLRPRAPERLFVWQVAIEAKSRGKGIAKRAIEAILKNLERKGHCIQAIEATYTPSNLASKALFHALGREWKVVWIEENFLEGALLSAQEAHEEEWLITLPFSSEALGVQGANHANL.

One can recognise an N-acetyltransferase domain in the interval 1–148; it reads MFRPPSIKDA…GALLSAQEAH (148 aa).

This sequence belongs to the acetyltransferase family. EctA subfamily.

The enzyme catalyses L-2,4-diaminobutanoate + acetyl-CoA = (2S)-4-acetamido-2-aminobutanoate + CoA + H(+). It functions in the pathway amine and polyamine biosynthesis; ectoine biosynthesis; L-ectoine from L-aspartate 4-semialdehyde: step 2/3. Catalyzes the acetylation of L-2,4-diaminobutyrate (DABA) to gamma-N-acetyl-alpha,gamma-diaminobutyric acid (ADABA) with acetyl coenzyme A. The polypeptide is L-2,4-diaminobutyric acid acetyltransferase (ectA) (Wolinella succinogenes (strain ATCC 29543 / DSM 1740 / CCUG 13145 / JCM 31913 / LMG 7466 / NCTC 11488 / FDC 602W) (Vibrio succinogenes)).